A 247-amino-acid polypeptide reads, in one-letter code: MERVGTPEEERQAGPVLPTSLESDSSKRTSWGFLITGVVGGALLTVYAVATPFITPALRKVCLPFVPATSKQVENVVRMLRHRRGPLVDIGSGDGRIVIAAAKEGFPAVGYELNPWLVWYSRYRAWRAGVHGSAKFYISDLWKVTFAQYSNVVIFGVPQMMPQLEKKLELELEDGARVIACRFPFPRWTPDHTTGEGIDTVWAYDMSAQRGRGGRPNQEWVGQKNLSETAGLQASSSETRSKLLDVE.

Residue Met-1 is modified to N-acetylmethionine. Residues 1-12 are compositionally biased toward basic and acidic residues; it reads MERVGTPEEERQ. Residues 1 to 25 are disordered; it reads MERVGTPEEERQAGPVLPTSLESDS. A helical membrane pass occupies residues 34–54; that stretch reads LITGVVGGALLTVYAVATPFI. The interval 51 to 85 is required for mitochondrial location; sequence TPFITPALRKVCLPFVPATSKQVENVVRMLRHRRG. A disordered region spans residues 209 to 247; it reads QRGRGGRPNQEWVGQKNLSETAGLQASSSETRSKLLDVE. Over residues 224–238 the composition is skewed to polar residues; that stretch reads KNLSETAGLQASSSE.

Belongs to the ANT/ATPSC lysine N-methyltransferase family. In terms of tissue distribution, ubiquitously expressed.

It is found in the mitochondrion membrane. It catalyses the reaction L-lysyl-[protein] + 3 S-adenosyl-L-methionine = N(6),N(6),N(6)-trimethyl-L-lysyl-[protein] + 3 S-adenosyl-L-homocysteine + 3 H(+). Its function is as follows. Mitochondrial protein-lysine N-methyltransferase that trimethylates ATP synthase subunit C, ATP5MC1 and ATP5MC2. Trimethylation is required for proper incorporation of the C subunit into the ATP synthase complex and mitochondrial respiration. Promotes chronic pain. Involved in persistent inflammatory and neuropathic pain: methyltransferase activity in the mitochondria of sensory neurons promotes chronic pain via a pathway that depends on the production of reactive oxygen species (ROS) and on the engagement of spinal cord microglia. The sequence is that of ATP synthase subunit C lysine N-methyltransferase from Mus musculus (Mouse).